The following is a 125-amino-acid chain: MAGAGPTMLLREENGCCSRRQSSSSAGDSDGEQEDSPATRARQQLEALLNKTMRIRMTDGRTLVGCFLCTDRDCNVILGSAQEFLKPSDSFSAGEPRVLGLAMVPGHHIVSIEVQRESLSGGPYL.

The segment at 1–42 (MAGAGPTMLLREENGCCSRRQSSSSAGDSDGEQEDSPATRAR) is disordered. An N-acetylalanine modification is found at alanine 2. The segment covering 18 to 28 (SRRQSSSSAGD) has biased composition (low complexity). A phosphoserine mark is found at serine 22, serine 25, and serine 29. One can recognise a Sm domain in the interval 40–118 (RARQQLEALL…IVSIEVQRES (79 aa)).

It belongs to the snRNP Sm proteins family. Component of the N-terminal acetyltransferase C (NatC) complex, which is composed of NAA35, NAA38 and NAA30.

The protein localises to the cytoplasm. Its subcellular location is the nucleus. Auxillary component of the N-terminal acetyltransferase C (NatC) complex which catalyzes acetylation of N-terminal methionine residues. N-terminal acetylation protects proteins from ubiquitination and degradation by the N-end rule pathway. This Mus musculus (Mouse) protein is N-alpha-acetyltransferase 38, NatC auxiliary subunit (Naa38).